Here is a 645-residue protein sequence, read N- to C-terminus: Serine/threonine-protein kinase BUR1 (645 aa).

The Protein kinase domain occupies 55-379; sequence YREEEKLGQG…AMKAKKHPFF (325 aa). ATP contacts are provided by residues 61–69 and Lys84; that span reads LGQGTFGEV. Asp208 acts as the Proton acceptor in catalysis. Disordered stretches follow at residues 407 to 428, 442 to 513, and 533 to 645; these read EMNE…STDN, ASIP…KYPA, and RYRN…ADYY. 2 stretches are compositionally biased toward polar residues: residues 409 to 428 and 457 to 474; these read NESM…STDN and IPAQ…TQNI. The span at 477-486 shows a compositional bias: pro residues; sequence EPIPTAPLPK. The span at 578 to 598 shows a compositional bias: polar residues; sequence NRYQNQDYNTSRNTGYNQYSQ.

The protein belongs to the protein kinase superfamily. CMGC Ser/Thr protein kinase family. CDC2/CDKX subfamily.

The protein resides in the nucleus. It carries out the reaction L-seryl-[protein] + ATP = O-phospho-L-seryl-[protein] + ADP + H(+). The enzyme catalyses L-threonyl-[protein] + ATP = O-phospho-L-threonyl-[protein] + ADP + H(+). The catalysed reaction is [DNA-directed RNA polymerase] + ATP = phospho-[DNA-directed RNA polymerase] + ADP + H(+). Functionally, serine/threonine-protein kinase involved in transcription regulation. Phosphorylates the UBC2/RAD6 ubiquitin-conjugating enzyme (E2), leading to monoubiquitination of histone H2B and the silencing of telomeric-associated genes. Also required for histone H3 methylation. Necessary for the recovery from pheromone-induced growth arrest in the cell cycle G1 phase. The protein is Serine/threonine-protein kinase BUR1 (BUR1) of Kluyveromyces lactis (strain ATCC 8585 / CBS 2359 / DSM 70799 / NBRC 1267 / NRRL Y-1140 / WM37) (Yeast).